We begin with the raw amino-acid sequence, 727 residues long: MSKRKHESSDSNKKAMKKQQNKIEEEEEEITNTTTTTTTTNNNYNNIKSNLTIDQWIPKKETFSKRYYEILEKRKELPVWKQKEDFIKVIKENQVVILVGETGSGKTTQIPQFVVDAGLIRPGKMVGVTQPRRVAAISVAKRVSEEMDFELGEEVGYSIRFEELSSARTFMKYLTDGMLLRESMSDPTLNKYDVIILDEAHERTLSTDILFGLIKDILKRRKDLKLIVMSATLEAGKFQKYFENAPLIKVPGRLHPVEIFYTEEAAKDYLESAVRTVIDIHTNEGTGDILVFLTGEEEIEDTCAKIQRETRERGLPPMKTLPLYSSLPIYQQSKIFDTCKERKCIVSTNIAETSLTIDGIVFVVDPGFSKQKTYNPRSRVESLLVAPISKASANQRAGRAGRTRPGKCFRLYTEKAFKELMIQQTHPEILRSNLASVVLQLLKLGVVDLVHFDFMDPPVPDTLIRALEVLHYLGALDDEGQLTEIGSIMSEFPLDPQLSKMLIVSAERSCSNEILTIAAMLSAPNCFMRPKDNRIEADSAKKSFDHFDGDHLTMLNVYHSFKKNGEDPTWCYDNFLNHRAIKQADSVRSQLARILTRFKLPLVSGDVNSKFYYENIKKCIAAGFFMQVAKCEKKNIYFTLGDEQSVIFHPSTGLTRRPEFCIYNEFVLTSENYIRTITDVKFDWLLELAPSYFKQKSFPKKTKETIQRAQRLYSGSSSGSSSGSNKK.

The interval 1–41 (MSKRKHESSDSNKKAMKKQQNKIEEEEEEITNTTTTTTTTN) is disordered. A compositionally biased stretch (low complexity) spans 31-41 (TNTTTTTTTTN). Positions 87 to 251 (IKVIKENQVV…FENAPLIKVP (165 aa)) constitute a Helicase ATP-binding domain. 100 to 107 (GETGSGKT) contributes to the ATP binding site. Positions 198–201 (DEAH) match the DEAH box motif. Positions 273-445 (AVRTVIDIHT…SVVLQLLKLG (173 aa)) constitute a Helicase C-terminal domain.

It belongs to the DEAD box helicase family. DEAH subfamily. DDX15/PRP43 sub-subfamily.

The protein resides in the nucleus. It carries out the reaction ATP + H2O = ADP + phosphate + H(+). Pre-mRNA processing factor involved in disassembly of spliceosomes after the release of mature mRNA. This chain is Putative ATP-dependent RNA helicase DHX15 (dhx15), found in Dictyostelium discoideum (Social amoeba).